The sequence spans 376 residues: MQLRREIFDKARRVVVKVGSAILTNVGGIHTSFIADLAREISYLRQSGHEVILVSSGAVAAGRKKISWQDSAPLGMKEKQALAAIGQSHLMRTYEEAFGFYELDVAQILLTHADLSHRDRYLNIRNTILTLLKFGVTPIINENDTVSVEELKFGDNDTLAALLTNLLEADICICLTDVDALYDKNPQKDPTARPLHIVTKISPEIEAMAGNSNSLFGTGGMQSKIRAAKIVFSGGGTAIIGPGRAPRVLQRLFAGEDIGTIFLPCKERMKSKKQWIAHVLKPKGTLLLDAGACKALLQGGKSLLPSGIVGISGEFDRGDSVNCCRLDGSRIAVGLVNYASVDVNAIKGLQSREIASVLKCCDNEEVIHRDNLVILS.

Residue Lys-17 participates in ATP binding. The substrate site is built by Ser-56, Asp-144, and Asn-156. Residues 176-177 (TD) and 218-224 (TGGMQSK) contribute to the ATP site. A PUA domain is found at 283 to 359 (KGTLLLDAGA…QSREIASVLK (77 aa)).

It belongs to the glutamate 5-kinase family.

Its subcellular location is the cytoplasm. It carries out the reaction L-glutamate + ATP = L-glutamyl 5-phosphate + ADP. Its pathway is amino-acid biosynthesis; L-proline biosynthesis; L-glutamate 5-semialdehyde from L-glutamate: step 1/2. Functionally, catalyzes the transfer of a phosphate group to glutamate to form L-glutamate 5-phosphate. The polypeptide is Glutamate 5-kinase (Desulfotalea psychrophila (strain LSv54 / DSM 12343)).